The sequence spans 199 residues: Large ribosomal subunit protein mL51 (199 aa).

The N-terminal 15 residues, 1–15, are a transit peptide targeting the mitochondrion; the sequence is MNSASISRLTSVIRT.

It belongs to the mitochondrion-specific ribosomal protein mL51 family. Component of the mitochondrial ribosome large subunit (39S) which comprises a 16S rRNA and about 50 distinct proteins.

The protein localises to the mitochondrion. The polypeptide is Large ribosomal subunit protein mL51 (mrpl-51) (Caenorhabditis briggsae).